The primary structure comprises 142 residues: Large ribosomal subunit protein uL11 (142 aa).

The protein belongs to the universal ribosomal protein uL11 family. In terms of assembly, part of the ribosomal stalk of the 50S ribosomal subunit. Interacts with L10 and the large rRNA to form the base of the stalk. L10 forms an elongated spine to which L12 dimers bind in a sequential fashion forming a multimeric L10(L12)X complex. Post-translationally, one or more lysine residues are methylated.

Its function is as follows. Forms part of the ribosomal stalk which helps the ribosome interact with GTP-bound translation factors. This Bradyrhizobium sp. (strain ORS 278) protein is Large ribosomal subunit protein uL11.